The primary structure comprises 359 residues: Ribosome biogenesis protein BRX1 homolog (359 aa).

A compositionally biased stretch (basic residues) spans 1 to 12; the sequence is MGRKFQNKKKKA. The interval 1–42 is disordered; it reads MGRKFQNKKKKAAPQLEIVPLDENPPLPPQRSSDDVVPKKAR. In terms of domain architecture, Brix spans 50–241; the sequence is QRVLVFSARG…PVKIFDGSFT (192 aa).

The protein belongs to the BRX1 family.

The protein localises to the nucleus. It localises to the nucleolus. Functionally, required for biogenesis of the 60S ribosomal subunit. The polypeptide is Ribosome biogenesis protein BRX1 homolog (Drosophila melanogaster (Fruit fly)).